A 312-amino-acid polypeptide reads, in one-letter code: Olfactory receptor 2C1 (312 aa).

The Extracellular portion of the chain corresponds to 1–24; that stretch reads MEVDSNSSSGSFILMGVSDHPHLE. Asparagine 6 carries N-linked (GlcNAc...) asparagine glycosylation. A helical membrane pass occupies residues 25-48; sequence IIFFAVILASYLLTLVGNLTIILL. Over 49-57 the chain is Cytoplasmic; sequence SRLDARLHT. The chain crosses the membrane as a helical span at residues 58-79; the sequence is PMYFFLSNLSSLDLAFTTSSVP. The Extracellular segment spans residues 80 to 100; the sequence is QMLKNLWGPDKTISYGGCVTQ. Cysteines 97 and 189 form a disulfide. The helical transmembrane segment at 101–120 threads the bilayer; sequence LYVFLWLGATECILLVVMAF. The Cytoplasmic portion of the chain corresponds to 121-139; that stretch reads DRYVAVCRPLHYMTVMNPR. Residues 140–160 form a helical membrane-spanning segment; the sequence is LCWGLAAISWLGGLGNSVIQS. Over 161-200 the chain is Extracellular; sequence TFTLQLPFCGHRKVDNFLCEVPAMIKLACGDTSLNEAVLN. Residues 201 to 222 form a helical membrane-spanning segment; that stretch reads GVCTFFTVVPVSVILVSYCFIA. Over 223-236 the chain is Cytoplasmic; that stretch reads QAVMKIRSVEGRRK. Residues 237–261 form a helical membrane-spanning segment; sequence AFNTCVSHLVVVFLFYGSAIYGYLL. Residues 262 to 272 are Extracellular-facing; sequence PAKSSNQSQGK. Residues 273–292 form a helical membrane-spanning segment; it reads FISLFYSVVTPMVNPLIYTL. The Cytoplasmic portion of the chain corresponds to 293–312; it reads RNKEVKGALGRLLGKGRGAS.

This sequence belongs to the G-protein coupled receptor 1 family. Olfactory epithelium. Present in various subcellular compartments of the olfactory sensory neurons, particularly in the axonal processes and neve terminals.

The protein localises to the cell membrane. Functionally, olfactory receptor that is activated by the binding of organosulfur odorants with thioether groups such as (methylthio)methanetiol (MTMT). Also binds odorants acetophenone and benzaldehyde. The activity of this receptor is mediated by G proteins which activate adenylyl cyclase. May be involved in the molecular processes underlying fasciculation and targeting of olfactory axons. The protein is Olfactory receptor 2C1 of Mus musculus (Mouse).